We begin with the raw amino-acid sequence, 120 residues long: Guanidine hydrolase-activating protein A (120 aa).

Residues H2, E3, and E41 each coordinate Ni(2+). C74, C77, C91, and C94 together coordinate Zn(2+).

It belongs to the HypA/HybF family.

Its function is as follows. Involved in the maturation of the nickel-dependent guanidine hydrolase GdmH. Required for nickel insertion into the metal center of GdmH. Seems to be required only for GdmH activation and not for activity. This Synechocystis sp. (strain ATCC 27184 / PCC 6803 / Kazusa) protein is Guanidine hydrolase-activating protein A.